The chain runs to 424 residues: GTPase Obg (424 aa).

The Obg domain occupies 1 to 160; the sequence is MFDRVEINIK…YDLILELKLI (160 aa). Positions 161-328 constitute an OBG-type G domain; sequence ADVAIIGYPN…LLAKVAEKLD (168 aa). Residues 167–174, 192–196, 213–216, 280–283, and 309–311 contribute to the GTP site; these read GYPNVGKS, FTTLS, EVPG, NKID, and SAL. Positions 174 and 194 each coordinate Mg(2+). The 76-residue stretch at 349-424 folds into the OCT domain; sequence PAPKGKMGFR…IITGRMEWYL (76 aa).

This sequence belongs to the TRAFAC class OBG-HflX-like GTPase superfamily. OBG GTPase family. As to quaternary structure, monomer. Requires Mg(2+) as cofactor.

The protein localises to the cytoplasm. Functionally, an essential GTPase which binds GTP, GDP and possibly (p)ppGpp with moderate affinity, with high nucleotide exchange rates and a fairly low GTP hydrolysis rate. Plays a role in control of the cell cycle, stress response, ribosome biogenesis and in those bacteria that undergo differentiation, in morphogenesis control. The polypeptide is GTPase Obg (Dehalococcoides mccartyi (strain ATCC BAA-2100 / JCM 16839 / KCTC 5957 / BAV1)).